The primary structure comprises 315 residues: Aspartate carbamoyltransferase catalytic subunit (315 aa).

Residues R65 and T66 each contribute to the carbamoyl phosphate site. K93 is a binding site for L-aspartate. Carbamoyl phosphate contacts are provided by R115, H145, and Q148. L-aspartate contacts are provided by R179 and R234. The carbamoyl phosphate site is built by G275 and P276.

This sequence belongs to the aspartate/ornithine carbamoyltransferase superfamily. ATCase family. As to quaternary structure, heterododecamer (2C3:3R2) of six catalytic PyrB chains organized as two trimers (C3), and six regulatory PyrI chains organized as three dimers (R2).

It catalyses the reaction carbamoyl phosphate + L-aspartate = N-carbamoyl-L-aspartate + phosphate + H(+). It participates in pyrimidine metabolism; UMP biosynthesis via de novo pathway; (S)-dihydroorotate from bicarbonate: step 2/3. Catalyzes the condensation of carbamoyl phosphate and aspartate to form carbamoyl aspartate and inorganic phosphate, the committed step in the de novo pyrimidine nucleotide biosynthesis pathway. This chain is Aspartate carbamoyltransferase catalytic subunit, found in Xanthomonas oryzae pv. oryzae (strain MAFF 311018).